The sequence spans 431 residues: tRNA(Ile)-lysidine synthase (431 aa).

20-25 (SGGLDS) is an ATP binding site.

The protein belongs to the tRNA(Ile)-lysidine synthase family.

The protein resides in the cytoplasm. The catalysed reaction is cytidine(34) in tRNA(Ile2) + L-lysine + ATP = lysidine(34) in tRNA(Ile2) + AMP + diphosphate + H(+). In terms of biological role, ligates lysine onto the cytidine present at position 34 of the AUA codon-specific tRNA(Ile) that contains the anticodon CAU, in an ATP-dependent manner. Cytidine is converted to lysidine, thus changing the amino acid specificity of the tRNA from methionine to isoleucine. This is tRNA(Ile)-lysidine synthase from Escherichia coli O157:H7.